The chain runs to 431 residues: 3-isopropylmalate dehydratase large subunit (431 aa).

Residues Cys-308, Cys-368, and Cys-371 each contribute to the [4Fe-4S] cluster site.

The protein belongs to the aconitase/IPM isomerase family. LeuC type 2 subfamily. As to quaternary structure, heterodimer of LeuC and LeuD. [4Fe-4S] cluster serves as cofactor.

The catalysed reaction is (2R,3S)-3-isopropylmalate = (2S)-2-isopropylmalate. It participates in amino-acid biosynthesis; L-leucine biosynthesis; L-leucine from 3-methyl-2-oxobutanoate: step 2/4. Catalyzes the isomerization between 2-isopropylmalate and 3-isopropylmalate, via the formation of 2-isopropylmaleate. The sequence is that of 3-isopropylmalate dehydratase large subunit from Desulfosudis oleivorans (strain DSM 6200 / JCM 39069 / Hxd3) (Desulfococcus oleovorans).